The sequence spans 270 residues: tRNA pseudouridine synthase A (270 aa).

Asp60 serves as the catalytic Nucleophile. The tract at residues Phe107–Phe111 is RNA binding. Substrate is bound at residue Tyr118. The interval Gln168–Arg172 is interaction with tRNA.

This sequence belongs to the tRNA pseudouridine synthase TruA family. In terms of assembly, homodimer.

The catalysed reaction is uridine(38/39/40) in tRNA = pseudouridine(38/39/40) in tRNA. Formation of pseudouridine at positions 38, 39 and 40 in the anticodon stem and loop of transfer RNAs. This chain is tRNA pseudouridine synthase A, found in Klebsiella pneumoniae (strain 342).